Reading from the N-terminus, the 245-residue chain is MFKWLMSSLCGIRNSTSPEVYEPIIGGQNPATMLRLQSALAAVNALLPATLTIEDVISSADNTRRLVKAQTLARTYQACQHNIECLSRHRASSDNPNLNAVVTTHMINAKRLSDTCLAALMHLYLSVGAVDATTDTMVDHAIRMTAENSVVMADVAVLEKTLGLDPQATVRAQDLLALNSGVLNSVNAVAEMTDPTDDVEFTQSVHSPLLPRQLSTTEVVGVPSPVKSNLKSKHKPKRKASLVAV.

Residue Cys10 is the site of S-palmitoyl cysteine; by host attachment. Residues 225 to 245 (PVKSNLKSKHKPKRKASLVAV) form a disordered region. The segment covering 230–245 (LKSKHKPKRKASLVAV) has biased composition (basic residues).

Belongs to the herpesviridae UL51 family. In terms of assembly, oligomerizes. Interacts with ORF55; this interaction mediates ORF55 incorporation to virions. In terms of processing, phosphorylated. Palmitoylation is necessary for Golgi localization.

The protein localises to the virion tegument. Its subcellular location is the host cytoplasm. The protein resides in the host Golgi apparatus. Plays several roles during the time course of infection, including egress of virus particles from the perinuclear space and secondary envelopment of cytoplasmic capsids that bud into specific trans-Golgi network (TGN)-derived membranes. This Equine herpesvirus 1 (strain Ab4p) (EHV-1) protein is Tegument protein UL51 homolog.